We begin with the raw amino-acid sequence, 313 residues long: Beta-ribofuranosylphenol 5'-phosphate synthase (313 aa).

It belongs to the beta-RFA-P synthase family. Homodimer.

The catalysed reaction is 5-phospho-alpha-D-ribose 1-diphosphate + 4-hydroxybenzoate + H(+) = 4-(beta-D-ribofuranosyl)phenol 5'-phosphate + CO2 + diphosphate. The enzyme catalyses 4-aminobenzoate + 5-phospho-alpha-D-ribose 1-diphosphate + H(+) = 4-(beta-D-ribofuranosyl)aminobenzene 5'-phosphate + CO2 + diphosphate. It functions in the pathway cofactor biosynthesis; 5,6,7,8-tetrahydromethanopterin biosynthesis. Catalyzes the condensation of 4-hydroxybenzoate (HB) with 5-phospho-alpha-D-ribose 1-diphosphate (PRPP) to produce beta-ribofuranosylphenol 5'-phosphate (beta-RFH-P). Also catalyzes the condensation of 4-aminobenzoate (pABA) with PRPP to produce beta-ribofuranosylaminobenzene 5'-phosphate (beta-RFA-P). The sequence is that of Beta-ribofuranosylphenol 5'-phosphate synthase from Archaeoglobus fulgidus (strain ATCC 49558 / DSM 4304 / JCM 9628 / NBRC 100126 / VC-16).